Consider the following 418-residue polypeptide: MSRNHQRPNLGLVDAPPNDHVEEYVVEKILGKRFVNGRPQVLVKWSGFPNENNTWEPLENVGNCMKLVSDFESEVFRLHRKAAAKSVGKSKSSPSSSGPLITENGPSSSKKTQQHSKSVQAKNTAGMSKMNQKKGKNIKKTAGKIKDIENYPKTQMPSTSQVSTDSTEVFDGNPSATTTNMIKSPRIQSLFSDLNLIEPTKDKDVGDTSLKTPPKSRRLIEFPQREDAPLSSKHVSPMLIRKESQPLQSSCTDDSDLGESSSSMSLPTVSSTSSEKSIKVTKSEPKTLGQIKFSSRSSDGGHAASSLGAPKEGDIGLDLSGSDSMDSEVESMRRCPRRKRKKTYPDWKFPEMTKPFGVNRGLDLDKILHCYQMNDDLFMFVTWKGCSSIDAVHINDIKEAYPLQIIKYFESLRIIVPK.

A Chromo domain is found at 24 to 74; that stretch reads YVVEKILGKRFVNGRPQVLVKWSGFPNENNTWEPLENVGNCMKLVSDFESE. Low complexity-rich tracts occupy residues 84-99 and 107-120; these read AKSVGKSKSSPSSSGP and SSSKKTQQHSKSVQ. 2 disordered regions span residues 84–167 and 199–337; these read AKSV…TDST and PTKD…RCPR. Positions 131 to 143 are enriched in basic residues; it reads NQKKGKNIKKTAG. Polar residues predominate over residues 152–167; the sequence is PKTQMPSTSQVSTDST. Basic and acidic residues predominate over residues 218–228; sequence RLIEFPQREDA. The span at 258-275 shows a compositional bias: low complexity; sequence GESSSSMSLPTVSSTSSE. Basic and acidic residues predominate over residues 276-285; the sequence is KSIKVTKSEP. The segment at 353–418 is required for interaction with del/deadlock; sequence TKPFGVNRGL…FESLRIIVPK (66 aa).

In terms of assembly, homodimer in solution. Dimerization is essential for chromatin binding. Component of the Rhino-Deadlock-Cutoff (RDC) complex, composed of rhi/rhino, del/deadlock and cuff/cutoff. Interacts (via C-terminus) with del/deadlock (via N-terminus); this interaction is direct. Two copies of del/deadlock associate with each rhi/rhino dimer. Interacts with cuff/cutoff; this interaction is indirect and is mediated by del/deadlock. Interacts (via Chromo domain) with kipf/kipferl (via C2H2 type zinc finger 4). Interacts (via Chromo domain) with His3/histone H3 (via N-terminus di- or tri-methylated on 'Lys-10' (H3K9me2/3)); this interaction is direct. Two His3 N-terminal tails oriented anti-parallel to each other are required for dimer binding to His3. In terms of tissue distribution, female specific, expressed in both somatic and germline cells but highly enriched in ovaries. In the germarium of the developing oocyte expressed in germline stem cells, cystoblasts and developing germline cysts. Expressed in nurse cells in the germarium and egg chamber.

It localises to the nucleus. It is found in the chromosome. Its function is as follows. Involved in piRNA (piwi-interacting RNA)-mediated transposon repression. May be involved in formation of the perinuclear nuage, a subcellular structure implicated in RNA processing that may be involved in transposon RNA surveillance and silencing. Required for ping-pong amplification during piRNA biogenesis, probably by promoting transcription of piRNA precursors. As part of the Rhino-Deadlock-Cutoff (RDC) Complex associates with, and drives non-canonical transcription of germline specific dual-strand piRNA clusters 80F, 38C and 42AB, but not single-stranded piRNA cluster 20A. Induction of piRNA expression is potentially achieved through a mechanism that prevents transcriptional termination and leads to readthrough from flanking transcription units. Recruited to specific chromatin regions by a combination of H3K9me2/3 histone methylation and differentially expressed sequence-specific recruitment factors. This association may involve direct interaction with DNA. Associates with chromatin upon exposure to homologous piRNA and facilitates transcriptional read-through. As part of the RDC complex, involved in suppression of splicing. In ovaries, recruitment to specific heterochromatin clusters is nucleated and stabilized by kipf/kipferl. During oogenesis, involved in axis specification and may regulate chromosome condensation at the onset of a mitotic-like phase that occurs during nurse cell chromosome duplication. Involved in the distribution of mRNAs for proteins that play a role in anterior-posterior and dorsal-ventral axes specification during development of the oocyte, including grk/gurken, osk/oskar and vas/vasa. Mitigates meiotic double strand breaks and interacts with DNA damage signaling to mediate axis specification. This Drosophila melanogaster (Fruit fly) protein is Chromo domain-containing protein rhino.